The following is a 381-amino-acid chain: Secretion apparatus protein BsaZ (381 aa).

The next 4 membrane-spanning stretches (helical) occupy residues 28–48 (IVALVVIATGALSAPALVDLT), 80–100 (IAAPFVLLCAAVGALPSLVQS), 134–154 (AVKALLYVGVFAITVRVFADL), and 175–195 (IVLTVRLVLLFLLCALPVLIV). Positions 343 to 381 (NRGGPPREMPPEATHAPDAHGGDAASGGATSAQAGERNA) are disordered. Positions 364-381 (GDAASGGATSAQAGERNA) are enriched in low complexity.

The protein belongs to the type III secretion exporter family.

The protein localises to the cell membrane. Its function is as follows. Part of the bsa type III secretion system, is involved in the intracellular replication of invading bacteria inside the host cell. Probably necessary for the lysis of the vacuole membrane and escape into the host cell cytoplasm. The sequence is that of Secretion apparatus protein BsaZ (bsaZ) from Burkholderia thailandensis (strain ATCC 700388 / DSM 13276 / CCUG 48851 / CIP 106301 / E264).